A 150-amino-acid chain; its full sequence is UPF0506 protein SJCHGC03144 (150 aa).

The first 18 residues, 1-18 (MNTCIQLLILCLVTVINS), serve as a signal peptide directing secretion. Residues Asn20, Asn36, Asn52, and Asn110 are each glycosylated (N-linked (GlcNAc...) asparagine). 3 disulfides stabilise this stretch: Cys116-Cys130, Cys123-Cys134, and Cys129-Cys139.

Belongs to the UPF0506 family.

The protein resides in the secreted. The chain is UPF0506 protein SJCHGC03144 from Schistosoma japonicum (Blood fluke).